Reading from the N-terminus, the 214-residue chain is Pyridoxine/pyridoxamine 5'-phosphate oxidase (214 aa).

Residues 9–12 (RLDY) and Lys67 each bind substrate. FMN contacts are provided by residues 62-67 (RMVLLK), 77-78 (FT), Lys84, and Gln106. Residues Tyr124, Arg128, and Ser132 each coordinate substrate. Residues 141–142 (QS) and Trp186 contribute to the FMN site. Residue 192 to 194 (RLH) participates in substrate binding. Arg196 contacts FMN.

The protein belongs to the pyridoxamine 5'-phosphate oxidase family. As to quaternary structure, homodimer. It depends on FMN as a cofactor.

It carries out the reaction pyridoxamine 5'-phosphate + O2 + H2O = pyridoxal 5'-phosphate + H2O2 + NH4(+). It catalyses the reaction pyridoxine 5'-phosphate + O2 = pyridoxal 5'-phosphate + H2O2. Its pathway is cofactor metabolism; pyridoxal 5'-phosphate salvage; pyridoxal 5'-phosphate from pyridoxamine 5'-phosphate: step 1/1. It participates in cofactor metabolism; pyridoxal 5'-phosphate salvage; pyridoxal 5'-phosphate from pyridoxine 5'-phosphate: step 1/1. Catalyzes the oxidation of either pyridoxine 5'-phosphate (PNP) or pyridoxamine 5'-phosphate (PMP) into pyridoxal 5'-phosphate (PLP). The protein is Pyridoxine/pyridoxamine 5'-phosphate oxidase of Microcystis aeruginosa (strain NIES-843 / IAM M-2473).